We begin with the raw amino-acid sequence, 102 residues long: Small ribosomal subunit protein uS10 (102 aa).

Belongs to the universal ribosomal protein uS10 family. Part of the 30S ribosomal subunit.

Its function is as follows. Involved in the binding of tRNA to the ribosomes. The chain is Small ribosomal subunit protein uS10 from Bacillus thuringiensis (strain Al Hakam).